The chain runs to 255 residues: 1-(5-phosphoribosyl)-5-[(5-phosphoribosylamino)methylideneamino] imidazole-4-carboxamide isomerase (255 aa).

The active-site Proton acceptor is aspartate 8. The Proton donor role is filled by aspartate 129.

Belongs to the HisA/HisF family.

The protein resides in the cytoplasm. The catalysed reaction is 1-(5-phospho-beta-D-ribosyl)-5-[(5-phospho-beta-D-ribosylamino)methylideneamino]imidazole-4-carboxamide = 5-[(5-phospho-1-deoxy-D-ribulos-1-ylimino)methylamino]-1-(5-phospho-beta-D-ribosyl)imidazole-4-carboxamide. It functions in the pathway amino-acid biosynthesis; L-histidine biosynthesis; L-histidine from 5-phospho-alpha-D-ribose 1-diphosphate: step 4/9. In Gloeobacter violaceus (strain ATCC 29082 / PCC 7421), this protein is 1-(5-phosphoribosyl)-5-[(5-phosphoribosylamino)methylideneamino] imidazole-4-carboxamide isomerase.